A 1789-amino-acid chain; its full sequence is Protein sprint (1789 aa).

Disordered stretches follow at residues 53–120 (TTAN…AHPP), 140–190 (TTTA…DLAN), 218–237 (PLWN…HPTG), 261–317 (QRMH…QAGL), 329–378 (LNNN…DADD), and 401–460 (RRSR…PCDL). Positions 82 to 114 (SINNNKNNNISNKNNNNNNNNNNNINNNNNNNN) are enriched in low complexity. Polar residues predominate over residues 140–149 (TTTANQLQQQ). Acidic residues predominate over residues 176–185 (PSEEDGDTDA). Polar residues predominate over residues 223-233 (RNGNGSTTTHC). The segment covering 295 to 317 (NNNNINNNHNGQQSQKSQQQAGL) has biased composition (low complexity). Positions 337 to 361 (QPGSMTPASNRTGLDSNQNQKQNLN) are enriched in polar residues. A compositionally biased stretch (low complexity) spans 409–418 (QSRTSLVSSS). Residues 428 to 445 (TSSEDDEEEPVEAEDEGE) show a composition bias toward acidic residues. Residues 473–566 (WFLPGIQRSG…ELPVQLMLPR (94 aa)) form the SH2 domain. 7 disordered regions span residues 632–689 (FFSD…SGGQ), 744–787 (TAPE…SANG), 852–918 (GECK…ILES), 969–1006 (DLLA…QSLL), 1040–1067 (AAED…QGSP), 1094–1123 (RSQM…MLQP), and 1138–1160 (PKPK…KRAR). The span at 639–649 (KPPPTGAPPLP) shows a compositional bias: pro residues. Positions 671 to 686 (TPSDTTNSSLSSFTTS) are enriched in low complexity. Over residues 857–868 (TLSSQGSSSNDS) the composition is skewed to polar residues. The segment covering 903–914 (AGKESQHYKESD) has biased composition (basic and acidic residues). Residues 974–984 (TPSTPTPTQQS) show a composition bias toward low complexity. Polar residues-rich tracts occupy residues 994-1006 (TATP…QSLL) and 1048-1065 (TTPT…SKQG). Over residues 1143–1154 (SQQQQQSQQQQQ) the composition is skewed to low complexity. A VPS9 domain is found at 1531–1673 (RSEDIQLLAQ…LKTFMASEGE (143 aa)). In terms of domain architecture, Ras-associating spans 1689–1777 (CSSVLRVIIP…CMLAYKRIDA (89 aa)).

The protein belongs to the RIN (Ras interaction/interference) family. In terms of tissue distribution, in late cellular blastoderm embryos, it is expressed in the posterior end. Then, as development proceeds, it is expressed in the developing midgut, amnioserosa and in a specific subset of CNS neurons. Isoform 1 is expressed earlier in developing midgut and amnioserosa, but is not expressed in the CNS.

Functionally, potential Ras effector protein. May function as a guanine nucleotide exchange (GEF), by exchanging bound GDP for free GTP. The sequence is that of Protein sprint (spri) from Drosophila melanogaster (Fruit fly).